The sequence spans 86 residues: Protein Tat (86 aa).

Residues 1-21 are disordered; that stretch reads MDPVDPNIEPWNHPGSQPKTA. The interaction with human CREBBP stretch occupies residues 1-24; it reads MDPVDPNIEPWNHPGSQPKTACNR. Residues 1 to 48 are transactivation; that stretch reads MDPVDPNIEPWNHPGSQPKTACNRCHCKKCCYHCQVCFITKGLGISYG. Zn(2+)-binding residues include C22, C25, and C27. A cysteine-rich region spans residues 22 to 37; it reads CNRCHCKKCCYHCQVC. K28 carries the post-translational modification N6-acetyllysine; by host PCAF. The Zn(2+) site is built by C30, H33, C34, and C37. The core stretch occupies residues 38-48; it reads FITKGLGISYG. Residues 47–86 form a disordered region; the sequence is YGRKKRRQRRRPSQGGQTHQDPIPKQPSSQPRGDPTGPKE. A compositionally biased stretch (basic residues) spans 48–58; the sequence is GRKKRRQRRRP. Positions 49–57 match the Nuclear localization signal, RNA-binding (TAR), and protein transduction motif; the sequence is RKKRRQRRR. The segment at 49 to 86 is interaction with the host capping enzyme RNGTT; it reads RKKRRQRRRPSQGGQTHQDPIPKQPSSQPRGDPTGPKE. An N6-acetyllysine; by host EP300 and GCN5L2 mark is found at K50 and K51. Asymmetric dimethylarginine; by host PRMT6 occurs at positions 52 and 53. Positions 60 to 77 are enriched in polar residues; it reads QGGQTHQDPIPKQPSSQP. K71 participates in a covalent cross-link: Glycyl lysine isopeptide (Lys-Gly) (interchain with G-Cter in ubiquitin). Residues 78 to 80 carry the Cell attachment site motif; it reads RGD.

Belongs to the lentiviruses Tat family. In terms of assembly, interacts with host CCNT1. Associates with the P-TEFb complex composed at least of Tat, P-TEFb (CDK9 and CCNT1), TAR RNA, RNA Pol II. Recruits the HATs CREBBP, TAF1/TFIID, EP300, PCAF and GCN5L2. Interacts with host KAT5/Tip60; this interaction targets the latter to degradation. Interacts with the host deacetylase SIRT1. Interacts with host capping enzyme RNGTT; this interaction stimulates RNGTT. Binds to host KDR, and to the host integrins ITGAV/ITGB3 and ITGA5/ITGB1. Interacts with host KPNB1/importin beta-1 without previous binding to KPNA1/importin alpha-1. Interacts with EIF2AK2. Interacts with host nucleosome assembly protein NAP1L1; this interaction may be required for the transport of Tat within the nucleus, since the two proteins interact at the nuclear rim. Interacts with host C1QBP/SF2P32; this interaction involves lysine-acetylated Tat. Interacts with the host chemokine receptors CCR2, CCR3 and CXCR4. Interacts with host DPP4/CD26; this interaction may trigger an anti-proliferative effect. Interacts with host LDLR. Interacts with the host extracellular matrix metalloproteinase MMP1. Interacts with host PRMT6; this interaction mediates Tat's methylation. Interacts with, and is ubiquitinated by MDM2/Hdm2. Interacts with host PSMC3 and HTATIP2. Interacts with STAB1; this interaction may overcome SATB1-mediated repression of IL2 and IL2RA (interleukin) in T cells by binding to the same domain than HDAC1. Interacts (when acetylated) with human CDK13, thereby increasing HIV-1 mRNA splicing and promoting the production of the doubly spliced HIV-1 protein Nef. Interacts with host TBP; this interaction modulates the activity of transcriptional pre-initiation complex. Interacts with host RELA. Interacts with host PLSCR1; this interaction negatively regulates Tat transactivation activity by altering its subcellular distribution. Asymmetrical arginine methylation by host PRMT6 seems to diminish the transactivation capacity of Tat and affects the interaction with host CCNT1. Post-translationally, acetylation by EP300, CREBBP, GCN5L2/GCN5 and PCAF regulates the transactivation activity of Tat. EP300-mediated acetylation of Lys-50 promotes dissociation of Tat from the TAR RNA through the competitive binding to PCAF's bromodomain. In addition, the non-acetylated Tat's N-terminus can also interact with PCAF. PCAF-mediated acetylation of Lys-28 enhances Tat's binding to CCNT1. Lys-50 is deacetylated by SIRT1. In terms of processing, polyubiquitination by host MDM2 does not target Tat to degradation, but activates its transactivation function and fosters interaction with CCNT1 and TAR RNA. Phosphorylated by EIF2AK2 on serine and threonine residues adjacent to the basic region important for TAR RNA binding and function. Phosphorylation of Tat by EIF2AK2 is dependent on the prior activation of EIF2AK2 by dsRNA.

It localises to the host nucleus. It is found in the host nucleolus. The protein resides in the host cytoplasm. Its subcellular location is the secreted. Its function is as follows. Transcriptional activator that increases RNA Pol II processivity, thereby increasing the level of full-length viral transcripts. Recognizes a hairpin structure at the 5'-LTR of the nascent viral mRNAs referred to as the transactivation responsive RNA element (TAR) and recruits the cyclin T1-CDK9 complex (P-TEFb complex) that will in turn hyperphosphorylate the RNA polymerase II to allow efficient elongation. The CDK9 component of P-TEFb and other Tat-activated kinases hyperphosphorylate the C-terminus of RNA Pol II that becomes stabilized and much more processive. Other factors such as HTATSF1/Tat-SF1, SUPT5H/SPT5, and HTATIP2 are also important for Tat's function. Besides its effect on RNA Pol II processivity, Tat induces chromatin remodeling of proviral genes by recruiting the histone acetyltransferases (HATs) CREBBP, EP300 and PCAF to the chromatin. This also contributes to the increase in proviral transcription rate, especially when the provirus integrates in transcriptionally silent region of the host genome. To ensure maximal activation of the LTR, Tat mediates nuclear translocation of NF-kappa-B by interacting with host RELA. Through its interaction with host TBP, Tat may also modulate transcription initiation. Tat can reactivate a latently infected cell by penetrating in it and transactivating its LTR promoter. In the cytoplasm, Tat is thought to act as a translational activator of HIV-1 mRNAs. Extracellular circulating Tat can be endocytosed by surrounding uninfected cells via the binding to several surface receptors such as CD26, CXCR4, heparan sulfate proteoglycans (HSPG) or LDLR. Neurons are rarely infected, but they internalize Tat via their LDLR. Through its interaction with nuclear HATs, Tat is potentially able to control the acetylation-dependent cellular gene expression. Modulates the expression of many cellular genes involved in cell survival, proliferation or in coding for cytokines or cytokine receptors. Tat plays a role in T-cell and neurons apoptosis. Tat induced neurotoxicity and apoptosis probably contribute to neuroAIDS. Circulating Tat also acts as a chemokine-like and/or growth factor-like molecule that binds to specific receptors on the surface of the cells, affecting many cellular pathways. In the vascular system, Tat binds to ITGAV/ITGB3 and ITGA5/ITGB1 integrins dimers at the surface of endothelial cells and competes with bFGF for heparin-binding sites, leading to an excess of soluble bFGF. The sequence is that of Protein Tat from Human immunodeficiency virus type 1 group M subtype D (isolate Z2/CDC-Z34) (HIV-1).